We begin with the raw amino-acid sequence, 860 residues long: Spindle and centriole-associated protein 1 (860 aa).

Disordered stretches follow at residues 160–200, 232–254, and 293–330; these read ESVI…SQSN, QSQM…QKAA, and KQLL…SSSN. Thr-236 is modified (phosphothreonine). Residues 236–249 are compositionally biased toward low complexity; it reads TASSGTPSSASPSG. Over residues 308-330 the composition is skewed to polar residues; the sequence is PSKQKSSMLSASTASTDLPSSSN. A coiled-coil region spans residues 383–437; that stretch reads RYLKESELQLRKEVETRQRLEEALGDHRELIDALTAEVLFLREENTATQARLQQY. Ser-646 carries the post-translational modification Phosphoserine. Residues 729–755 adopt a coiled-coil conformation; it reads SSMEERIAELNRQSMEARGKLLQLIEQ. Ser-765, Ser-769, and Ser-824 each carry phosphoserine. Residues 790 to 860 are disordered; the sequence is IPGAEAPESS…GWFALSTHVS (71 aa). The span at 808–824 shows a compositional bias: low complexity; that stretch reads SGLNSRRSSGAASNSCS.

In terms of assembly, interacts with CEP120.

It localises to the cytoplasm. The protein resides in the cytoskeleton. The protein localises to the microtubule organizing center. Its subcellular location is the centrosome. It is found in the centriole. It localises to the spindle. Its function is as follows. Regulator required for centriole duplication. for proper bipolar spindle formation and chromosome congression in mitosis. The polypeptide is Spindle and centriole-associated protein 1 (SPICE1) (Bos taurus (Bovine)).